Here is a 289-residue protein sequence, read N- to C-terminus: D-alanine aminotransferase (289 aa).

Tyr-31 contributes to the substrate binding site. Residue Arg-50 participates in pyridoxal 5'-phosphate binding. 2 residues coordinate substrate: Arg-99 and His-101. The residue at position 147 (Lys-147) is an N6-(pyridoxal phosphate)lysine. Residue Glu-179 participates in pyridoxal 5'-phosphate binding.

The protein belongs to the class-IV pyridoxal-phosphate-dependent aminotransferase family. Homodimer. Requires pyridoxal 5'-phosphate as cofactor.

The enzyme catalyses D-alanine + 2-oxoglutarate = D-glutamate + pyruvate. In terms of biological role, acts on the D-isomers of alanine, leucine, aspartate, glutamate, aminobutyrate, norvaline and asparagine. The enzyme transfers an amino group from a substrate D-amino acid to the pyridoxal phosphate cofactor to form pyridoxamine and an alpha-keto acid in the first half-reaction. The second half-reaction is the reverse of the first, transferring the amino group from the pyridoxamine to a second alpha-keto acid to form the product D-amino acid via a ping-pong mechanism. This is an important process in the formation of D-alanine and D-glutamate, which are essential bacterial cell wall components. In Listeria monocytogenes serovar 1/2a (strain ATCC BAA-679 / EGD-e), this protein is D-alanine aminotransferase (dat).